The sequence spans 488 residues: Cobyric acid synthase (488 aa).

One can recognise a GATase cobBQ-type domain in the interval aspartate 250–tryptophan 438. Catalysis depends on cysteine 331, which acts as the Nucleophile. Histidine 430 is an active-site residue.

This sequence belongs to the CobB/CobQ family. CobQ subfamily.

The protein operates within cofactor biosynthesis; adenosylcobalamin biosynthesis. Catalyzes amidations at positions B, D, E, and G on adenosylcobyrinic A,C-diamide. NH(2) groups are provided by glutamine, and one molecule of ATP is hydrogenolyzed for each amidation. This chain is Cobyric acid synthase, found in Trichodesmium erythraeum (strain IMS101).